The sequence spans 265 residues: Arcelin-2 (265 aa).

An N-terminal signal peptide occupies residues 1–21 (MASSNLLTLALFLVLLTHANS). 2 N-linked (GlcNAc...) asparagine glycosylation sites follow: N33 and N89. C165 and C201 form a disulfide bridge.

The protein belongs to the leguminous lectin family.

In terms of biological role, seed storage. This carbohydrate-binding lectin has toxic effects on bean bruchid pests. Antibiosis properties of legume lectins are proposed to be due to the lysis of epithelial cells of the intestine by binding to the carbohydrate moieties of these proteins. This chain is Arcelin-2 (ARC2), found in Phaseolus vulgaris (Kidney bean).